We begin with the raw amino-acid sequence, 65 residues long: Large ribosomal subunit protein bL35 (65 aa).

This sequence belongs to the bacterial ribosomal protein bL35 family.

The protein is Large ribosomal subunit protein bL35 of Blochmanniella pennsylvanica (strain BPEN).